A 315-amino-acid polypeptide reads, in one-letter code: Glutaminase (315 aa).

Substrate contacts are provided by Ser70, Asn120, Glu166, Asn173, Tyr197, Tyr249, and Val267.

The protein belongs to the glutaminase family. As to quaternary structure, homotetramer.

It carries out the reaction L-glutamine + H2O = L-glutamate + NH4(+). The sequence is that of Glutaminase from Mesorhizobium japonicum (strain LMG 29417 / CECT 9101 / MAFF 303099) (Mesorhizobium loti (strain MAFF 303099)).